The primary structure comprises 299 residues: Bifunctional methyltransferase-like/endonuclease (299 aa).

Residues 1–80 (MLSSKLLDIN…NLIVSPMQKA (80 aa)) are probable methylated-DNA--protein-cysteine methyltransferase-like. The segment at 81–299 (LLEKEVKIIG…GRGDSNPGRD (219 aa)) is endonuclease V. The Mg(2+) site is built by Asp-135 and Asn-197.

The protein in the N-terminal section; belongs to the MGMT family. This sequence in the C-terminal section; belongs to the endonuclease V family. Mg(2+) is required as a cofactor.

The protein resides in the cytoplasm. The enzyme catalyses Endonucleolytic cleavage at apurinic or apyrimidinic sites to products with a 5'-phosphate.. Its function is as follows. DNA repair enzyme involved in the repair of deaminated bases. Selectively cleaves double-stranded DNA at the second phosphodiester bond 3' to a deoxyinosine leaving behind the intact lesion on the nicked DNA. In Nanoarchaeum equitans (strain Kin4-M), this protein is Bifunctional methyltransferase-like/endonuclease.